Reading from the N-terminus, the 176-residue chain is 3-hydroxydecanoyl-[acyl-carrier-protein] dehydratase (176 aa).

The active site involves histidine 75.

This sequence belongs to the thioester dehydratase family. FabA subfamily. In terms of assembly, homodimer.

It localises to the cytoplasm. It catalyses the reaction a (3R)-hydroxyacyl-[ACP] = a (2E)-enoyl-[ACP] + H2O. The enzyme catalyses (3R)-hydroxydecanoyl-[ACP] = (2E)-decenoyl-[ACP] + H2O. The catalysed reaction is (2E)-decenoyl-[ACP] = (3Z)-decenoyl-[ACP]. It participates in lipid metabolism; fatty acid biosynthesis. In terms of biological role, necessary for the introduction of cis unsaturation into fatty acids. Catalyzes the dehydration of (3R)-3-hydroxydecanoyl-ACP to E-(2)-decenoyl-ACP and then its isomerization to Z-(3)-decenoyl-ACP. Can catalyze the dehydratase reaction for beta-hydroxyacyl-ACPs with saturated chain lengths up to 16:0, being most active on intermediate chain length. The protein is 3-hydroxydecanoyl-[acyl-carrier-protein] dehydratase of Actinobacillus pleuropneumoniae serotype 5b (strain L20).